A 101-amino-acid chain; its full sequence is Urease subunit beta (101 aa).

Belongs to the urease beta subunit family. Heterotrimer of UreA (gamma), UreB (beta) and UreC (alpha) subunits. Three heterotrimers associate to form the active enzyme.

The protein resides in the cytoplasm. It carries out the reaction urea + 2 H2O + H(+) = hydrogencarbonate + 2 NH4(+). Its pathway is nitrogen metabolism; urea degradation; CO(2) and NH(3) from urea (urease route): step 1/1. This is Urease subunit beta from Actinobacillus pleuropneumoniae serotype 7 (strain AP76).